The sequence spans 280 residues: Tryptophan synthase alpha chain (280 aa).

Active-site proton acceptor residues include Glu-50 and Asp-61.

This sequence belongs to the TrpA family. In terms of assembly, tetramer of two alpha and two beta chains.

It carries out the reaction (1S,2R)-1-C-(indol-3-yl)glycerol 3-phosphate + L-serine = D-glyceraldehyde 3-phosphate + L-tryptophan + H2O. It participates in amino-acid biosynthesis; L-tryptophan biosynthesis; L-tryptophan from chorismate: step 5/5. Functionally, the alpha subunit is responsible for the aldol cleavage of indoleglycerol phosphate to indole and glyceraldehyde 3-phosphate. This Methylorubrum extorquens (strain CM4 / NCIMB 13688) (Methylobacterium extorquens) protein is Tryptophan synthase alpha chain.